Here is a 1004-residue protein sequence, read N- to C-terminus: Unconventional myosin-Id (1004 aa).

One can recognise a Myosin motor domain in the interval 9-695 (FGKADFVLLD…TIFSLEEQRA (687 aa)). Position 102 to 109 (102 to 109 (GESGAGKT)) interacts with ATP. Residues 572-594 (MISLVEKLASKEPYYVRCIKPND) form an actin-binding region. IQ domains are found at residues 699-719 (KRIVLFLQKVWRGTLARMRYR) and 721-741 (MRAALIIIRAYRRYKVKSYIR). The region spanning 812–1003 (GQRADLGLQR…RSGYILSVPG (192 aa)) is the TH1 domain.

The protein belongs to the TRAFAC class myosin-kinesin ATPase superfamily. Myosin family. Interacts (via the two IQ motifs) with calmodulin. Interacts with F-actin.

It is found in the cytoplasm. The protein resides in the perikaryon. It localises to the cell projection. Its subcellular location is the dendrite. The protein localises to the early endosome. It is found in the cell cortex. Functionally, unconventional myosin that functions as actin-based motor protein with ATPase activity. Plays a role in the formation of Kupffer's vesicle, an organ that functions as a left-right organizer during embryogenesis. Plays a role in vesicular trafficking events that are required for normal lumen expansion of Kupffer's vesicle. Required for normal orientation of cilia in Kupffer's vesicle, and thus for normal, unidirectional circular flow and normal angular flow velocity, which then mediates asymmetric gene expression and left-right asymmetric development. Plays a role in endosomal protein trafficking, and especially in the transfer of cargo proteins from early to recycling endosomes. Required for normal planar cell polarity in ciliated cells, for normal rotational polarity of cilia, and for coordinated, unidirectional ciliary movement. This chain is Unconventional myosin-Id (myo1d), found in Danio rerio (Zebrafish).